Consider the following 438-residue polypeptide: tRNA(Ile)-lysidine synthase (438 aa).

27 to 32 (SGGVDS) serves as a coordination point for ATP.

This sequence belongs to the tRNA(Ile)-lysidine synthase family.

The protein resides in the cytoplasm. The catalysed reaction is cytidine(34) in tRNA(Ile2) + L-lysine + ATP = lysidine(34) in tRNA(Ile2) + AMP + diphosphate + H(+). Its function is as follows. Ligates lysine onto the cytidine present at position 34 of the AUA codon-specific tRNA(Ile) that contains the anticodon CAU, in an ATP-dependent manner. Cytidine is converted to lysidine, thus changing the amino acid specificity of the tRNA from methionine to isoleucine. This chain is tRNA(Ile)-lysidine synthase, found in Vibrio parahaemolyticus serotype O3:K6 (strain RIMD 2210633).